A 494-amino-acid chain; its full sequence is Glutamyl-tRNA(Gln) amidotransferase subunit A (494 aa).

Active-site charge relay system residues include Lys-78 and Ser-158. The Acyl-ester intermediate role is filled by Ser-182.

It belongs to the amidase family. GatA subfamily. In terms of assembly, heterotrimer of A, B and C subunits.

The enzyme catalyses L-glutamyl-tRNA(Gln) + L-glutamine + ATP + H2O = L-glutaminyl-tRNA(Gln) + L-glutamate + ADP + phosphate + H(+). Allows the formation of correctly charged Gln-tRNA(Gln) through the transamidation of misacylated Glu-tRNA(Gln) in organisms which lack glutaminyl-tRNA synthetase. The reaction takes place in the presence of glutamine and ATP through an activated gamma-phospho-Glu-tRNA(Gln). The polypeptide is Glutamyl-tRNA(Gln) amidotransferase subunit A (Jannaschia sp. (strain CCS1)).